Reading from the N-terminus, the 357-residue chain is Protein pelota homolog (357 aa).

The protein belongs to the eukaryotic release factor 1 family. Pelota subfamily. As to quaternary structure, monomer. It depends on a divalent metal cation as a cofactor.

The protein localises to the cytoplasm. May function in recognizing stalled ribosomes, interact with stem-loop structures in stalled mRNA molecules, and effect endonucleolytic cleavage of the mRNA. May play a role in the release non-functional ribosomes and degradation of damaged mRNAs. Has endoribonuclease activity. The polypeptide is Protein pelota homolog (Thermococcus gammatolerans (strain DSM 15229 / JCM 11827 / EJ3)).